A 419-amino-acid chain; its full sequence is Acyl transferase 9 (419 aa).

Active-site proton acceptor residues include His161 and Asp362.

The protein belongs to the plant acyltransferase family.

Involved in the incorporation of ferulate into the cell wall. May act as arabinoxylan feruloyl transferase. The sequence is that of Acyl transferase 9 from Oryza sativa subsp. japonica (Rice).